The primary structure comprises 277 residues: MWGKILGAFFGFLLGGPFGLLLGLFLGHKFDKARRNVYRGGGFGGFGTNRANSEERQAEFFYAGFAVMGHMAKAKGHVTEEEIRVASAIMDRMNLHGEARRQAQNAFREGKEDGFPLEETLAKVRQNCAGRADLLQFFLELQIQAAFADGSLHQNERQLLHVIARSLGFSERQLEQRLHMQEAAFRFQQGGFNQQHGGGFNQAPTRDQLADAYEVLGVTESATSQEVKRAYRKQMNEHHPDKLAAKGLPPEMMEIANQKAQELQAAYDMIRKEKGFK.

The Periplasmic portion of the chain corresponds to 1 to 4; it reads MWGK. The chain crosses the membrane as a helical span at residues 5–28; the sequence is ILGAFFGFLLGGPFGLLLGLFLGH. Over 29–277 the chain is Cytoplasmic; sequence KFDKARRNVY…DMIRKEKGFK (249 aa). A J domain is found at 211–277; the sequence is DAYEVLGVTE…DMIRKEKGFK (67 aa).

In terms of assembly, homodimer.

The protein localises to the cell inner membrane. Functionally, regulatory DnaK co-chaperone. Direct interaction between DnaK and DjlA is needed for the induction of the wcaABCDE operon, involved in the synthesis of a colanic acid polysaccharide capsule, possibly through activation of the RcsB/RcsC phosphotransfer signaling pathway. The colanic acid capsule may help the bacterium survive conditions outside the host. The polypeptide is Co-chaperone protein DjlA (Photobacterium profundum (strain SS9)).